The following is a 143-amino-acid chain: Small ribosomal subunit protein uS12 (143 aa).

The segment covering 1-19 (MGKPRGIRTARKHVNHRRE) has biased composition (basic residues). Positions 1–21 (MGKPRGIRTARKHVNHRREQR) are disordered. Pro-62 is subject to Hydroxyproline.

This sequence belongs to the universal ribosomal protein uS12 family. In terms of assembly, component of the 40S small ribosomal subunit.

Its subcellular location is the cytoplasm. The protein resides in the cytosol. The protein localises to the rough endoplasmic reticulum. This Papilio dardanus (African swallowtail butterfly) protein is Small ribosomal subunit protein uS12 (RpS23).